We begin with the raw amino-acid sequence, 136 residues long: Fluoride-specific ion channel FluC (136 aa).

4 helical membrane passes run 3 to 23 (TLPP…GAVL), 46 to 66 (ATLA…GVLF), 78 to 98 (LLIG…SLEV), and 109 to 129 (FAAL…VFGL). Residues Gly86 and Thr89 each contribute to the Na(+) site.

The protein belongs to the fluoride channel Fluc/FEX (TC 1.A.43) family.

It is found in the cell inner membrane. It catalyses the reaction fluoride(in) = fluoride(out). With respect to regulation, na(+) is not transported, but it plays an essential structural role and its presence is essential for fluoride channel function. In terms of biological role, fluoride-specific ion channel. Important for reducing fluoride concentration in the cell, thus reducing its toxicity. In Erythrobacter litoralis (strain HTCC2594), this protein is Fluoride-specific ion channel FluC.